The following is a 232-amino-acid chain: Large ribosomal subunit protein uL1 (232 aa).

It belongs to the universal ribosomal protein uL1 family. Part of the 50S ribosomal subunit.

Its function is as follows. Binds directly to 23S rRNA. The L1 stalk is quite mobile in the ribosome, and is involved in E site tRNA release. Functionally, protein L1 is also a translational repressor protein, it controls the translation of the L11 operon by binding to its mRNA. This chain is Large ribosomal subunit protein uL1, found in Jannaschia sp. (strain CCS1).